The sequence spans 315 residues: Acetyl-coenzyme A carboxylase carboxyl transferase subunit alpha (315 aa).

Positions 35 to 289 (KLSKKRFELM…RKAVAAELKI (255 aa)) constitute a CoA carboxyltransferase C-terminal domain.

This sequence belongs to the AccA family. As to quaternary structure, acetyl-CoA carboxylase is a heterohexamer composed of biotin carboxyl carrier protein (AccB), biotin carboxylase (AccC) and two subunits each of ACCase subunit alpha (AccA) and ACCase subunit beta (AccD).

It is found in the cytoplasm. The catalysed reaction is N(6)-carboxybiotinyl-L-lysyl-[protein] + acetyl-CoA = N(6)-biotinyl-L-lysyl-[protein] + malonyl-CoA. It participates in lipid metabolism; malonyl-CoA biosynthesis; malonyl-CoA from acetyl-CoA: step 1/1. Its function is as follows. Component of the acetyl coenzyme A carboxylase (ACC) complex. First, biotin carboxylase catalyzes the carboxylation of biotin on its carrier protein (BCCP) and then the CO(2) group is transferred by the carboxyltransferase to acetyl-CoA to form malonyl-CoA. This Francisella tularensis subsp. mediasiatica (strain FSC147) protein is Acetyl-coenzyme A carboxylase carboxyl transferase subunit alpha.